Consider the following 294-residue polypeptide: MTKAVLTSISQLALKALLYEVSLSPKPGLVDRFDNGAHDDMSFMTFIDSMIALSPFFQAYIETGFAYAKEEPLLLFNRLRQLGQKAEETMFCATQGINTHKGLNFSMALLLGATGAYLARTPHLMTDLGCFSKEDTLAICRLVKPMTAHLIQADLGHLNTKKEFTYGEQLFVTYGIKGPRGEASEGFTTLTNHALPYFRQMISQNDPETSQLRLLVYLMSIVEDGNLIHRGGIEAWKGVKADMRLLLQQDLSTTDLRLALSSYNQCLINQHLSPGGAADLLALTFYFAFLEKLL.

It belongs to the CitG/MdcB family.

The catalysed reaction is 3'-dephospho-CoA + ATP = 2'-(5''-triphospho-alpha-D-ribosyl)-3'-dephospho-CoA + adenine. This chain is Probable 2-(5''-triphosphoribosyl)-3'-dephosphocoenzyme-A synthase, found in Streptococcus pyogenes serotype M18 (strain MGAS8232).